The sequence spans 220 residues: UPF0502 protein VV2_0756 (220 aa).

It belongs to the UPF0502 family.

This Vibrio vulnificus (strain CMCP6) protein is UPF0502 protein VV2_0756.